The sequence spans 287 residues: Oxaloacetate decarboxylase (287 aa).

Serine 50 contributes to the substrate binding site. Position 88 (aspartate 88) interacts with Mg(2+). Residues arginine 159 and histidine 235 each contribute to the substrate site.

It belongs to the isocitrate lyase/PEP mutase superfamily. Oxaloacetate decarboxylase family. As to quaternary structure, homotetramer; dimer of dimers. The cofactor is Mg(2+).

It catalyses the reaction oxaloacetate + H(+) = pyruvate + CO2. Functionally, catalyzes the decarboxylation of oxaloacetate into pyruvate. Seems to play a role in maintaining cellular concentrations of bicarbonate and pyruvate. In Marinomonas sp. (strain MWYL1), this protein is Oxaloacetate decarboxylase.